Consider the following 410-residue polypeptide: Pyruvate dehydrogenase complex protein X component, mitochondrial (410 aa).

The N-terminal 30 residues, M1 to L30, are a transit peptide targeting the mitochondrion. The Lipoyl-binding domain occupies V32–A108. The residue at position 73 (K73) is an N6-lipoyllysine. Positions T169–L210 constitute a Peripheral subunit-binding (PSBD) domain.

This sequence belongs to the 2-oxoacid dehydrogenase family. Eukaryotic pyruvate dehydrogenase (PDH) complexes are organized as a core consisting of the oligomeric dihydrolipoamide acetyl-transferase (E2), around which are arranged multiple copies of pyruvate dehydrogenase (E1), dihydrolipoamide dehydrogenase (E3) and protein X (E3BP) bound by non-covalent bonds.

It is found in the mitochondrion matrix. Its function is as follows. Required for anchoring dihydrolipoamide dehydrogenase (E3) to the dihydrolipoamide transacetylase (E2) core of the pyruvate dehydrogenase complexes of eukaryotes. This specific binding is essential for a functional PDH complex. This chain is Pyruvate dehydrogenase complex protein X component, mitochondrial (PDX1), found in Saccharomyces cerevisiae (strain ATCC 204508 / S288c) (Baker's yeast).